The primary structure comprises 369 residues: Putative protein FAM10A5 (369 aa).

The interval 38 to 98 (MGGKVPPATQ…IEPDTDAPQE (61 aa)) is disordered. Residues 49 to 73 (AKSEENTKEEKPDSKKVEEDLKADE) are compositionally biased toward basic and acidic residues. Positions 89-98 (IEPDTDAPQE) are enriched in acidic residues. 3 TPR repeats span residues 114–147 (ANDKKVAAIEVLNDGELQKAIDLFTDAIKLNPRL), 149–181 (ILYAKRASVFVKLQKPNAAIQDCDRAIEINPDS), and 183–215 (QPYKWRGKAHRLLGHWEEAAHDLAFACKLDYDE). A compositionally biased stretch (basic and acidic residues) spans 256 to 272 (KAQEEQERAQREEEARR). The tract at residues 256 to 300 (KAQEEQERAQREEEARRQSGAHYGPFPGGFPGGMPGNFPGGMPGM) is disordered. Positions 281 to 300 (FPGGFPGGMPGNFPGGMPGM) are enriched in gly residues. Positions 319-358 (DPEALAAMQDPEVMVAFQDVAQNPANMSKYQSNPKVMNLI) constitute an STI1 domain. S346 carries the post-translational modification Phosphoserine. N6-acetyllysine occurs at positions 353 and 360.

This sequence belongs to the FAM10 family.

It is found in the cytoplasm. The sequence is that of Putative protein FAM10A5 (ST13P5) from Homo sapiens (Human).